Reading from the N-terminus, the 159-residue chain is Putative UPF0479 protein YDR545C-A (159 aa).

2 consecutive transmembrane segments (helical) span residues 38–58 (IVFCLPFFPALFLVPVQKVLQ) and 135–155 (VPMIWLDVFQVFFVFLVISQH).

It belongs to the UPF0479 family.

The protein localises to the membrane. In Saccharomyces cerevisiae (strain ATCC 204508 / S288c) (Baker's yeast), this protein is Putative UPF0479 protein YDR545C-A.